Reading from the N-terminus, the 301-residue chain is GLABROUS1 enhancer-binding protein-like 2 (301 aa).

The interval 1-62 (MATPTELGFS…NTKMASPPSN (62 aa)) is disordered. Residues 44-54 (KKKKKKTKHNT) are compositionally biased toward basic residues. Residues 268-289 (LSNEWKALCVEELKLNINKLRF) form a non-canonical leucine-zipper region.

It belongs to the GeBP family. Homo- and heterodimers. Interacts with GEBP, GPL1 and GPL3. Expressed in the apical meristem and young leaf primordia. Detected in the vascular tissues of cotyledons and leaves, in hydathodes and in the septun of siliques, but not in roots.

It localises to the nucleus. Its function is as follows. Probable transcription factor. May play redundant roles with GEBP and GPL1 in cytokinin responses by regulating the transcript levels of type-A ARR response genes. Involved in stress responses. Plays a repressive role in cell expansion by counteracting the positive role of CPR5 in this process, but does not regulate cell proliferation or endoreduplication. The sequence is that of GLABROUS1 enhancer-binding protein-like 2 from Arabidopsis thaliana (Mouse-ear cress).